A 2292-amino-acid chain; its full sequence is Protein Ycf2 (2292 aa).

1640-1647 serves as a coordination point for ATP; sequence GSIGIGRS.

Belongs to the Ycf2 family.

It localises to the plastid. The protein localises to the chloroplast stroma. In terms of biological role, probable ATPase of unknown function. Its presence in a non-photosynthetic plant (Epifagus virginiana) and experiments in tobacco indicate that it has an essential function which is probably not related to photosynthesis. The chain is Protein Ycf2 from Liriodendron tulipifera (Tuliptree).